We begin with the raw amino-acid sequence, 418 residues long: Probable carboxypeptidase AO090166000075 (418 aa).

An N-terminal signal peptide occupies residues 1–18 (MKATDLFHVTALVAGALA). N74 carries an N-linked (GlcNAc...) asparagine glycan. D147 contacts Zn(2+). A glycan (N-linked (GlcNAc...) asparagine) is linked at N168. The active-site Proton acceptor is the E179. E180 is a Zn(2+) binding site.

Belongs to the peptidase M20A family. The cofactor is Zn(2+).

The protein resides in the secreted. This Aspergillus oryzae (strain ATCC 42149 / RIB 40) (Yellow koji mold) protein is Probable carboxypeptidase AO090166000075.